The primary structure comprises 58 residues: Large ribosomal subunit protein bL32 (58 aa).

Positions 1 to 19 (MAVPKKRTSKSKKNMRKAN) are enriched in basic residues. The segment at 1 to 58 (MAVPKKRTSKSKKNMRKANWKNQAKLAAKKALSLGKSVETQRSHSFVHPRYEEEEEED) is disordered. A compositionally biased stretch (low complexity) spans 20–32 (WKNQAKLAAKKAL).

The protein belongs to the bacterial ribosomal protein bL32 family.

The polypeptide is Large ribosomal subunit protein bL32 (Trichodesmium erythraeum (strain IMS101)).